The primary structure comprises 98 residues: Cell cycle protein GpsB (98 aa).

Residues 34 to 71 are a coiled coil; that stretch reads LDIVIKDYEAFQQELDELRQENARLKRQVEELQKRPTT.

This sequence belongs to the GpsB family. As to quaternary structure, forms polymers through the coiled coil domains. Interacts with PBP1, MreC and EzrA.

It is found in the cytoplasm. Functionally, divisome component that associates with the complex late in its assembly, after the Z-ring is formed, and is dependent on DivIC and PBP2B for its recruitment to the divisome. Together with EzrA, is a key component of the system that regulates PBP1 localization during cell cycle progression. Its main role could be the removal of PBP1 from the cell pole after pole maturation is completed. Also contributes to the recruitment of PBP1 to the division complex. Not essential for septum formation. The sequence is that of Cell cycle protein GpsB from Geobacillus thermodenitrificans (strain NG80-2).